The primary structure comprises 408 residues: Acetylornithine/succinyldiaminopimelate aminotransferase (408 aa).

Residues 108–109 (GA) and Phe141 each bind pyridoxal 5'-phosphate. Arg144 provides a ligand contact to N(2)-acetyl-L-ornithine. Residue 226-229 (DEIQ) participates in pyridoxal 5'-phosphate binding. An N6-(pyridoxal phosphate)lysine modification is found at Lys255. A N(2)-acetyl-L-ornithine-binding site is contributed by Thr283. Thr284 lines the pyridoxal 5'-phosphate pocket.

Belongs to the class-III pyridoxal-phosphate-dependent aminotransferase family. ArgD subfamily. Homodimer. The cofactor is pyridoxal 5'-phosphate.

It localises to the cytoplasm. It carries out the reaction N(2)-acetyl-L-ornithine + 2-oxoglutarate = N-acetyl-L-glutamate 5-semialdehyde + L-glutamate. It catalyses the reaction N-succinyl-(2S,6S)-2,6-diaminopimelate + 2-oxoglutarate = (S)-2-succinylamino-6-oxoheptanedioate + L-glutamate. It functions in the pathway amino-acid biosynthesis; L-arginine biosynthesis; N(2)-acetyl-L-ornithine from L-glutamate: step 4/4. It participates in amino-acid biosynthesis; L-lysine biosynthesis via DAP pathway; LL-2,6-diaminopimelate from (S)-tetrahydrodipicolinate (succinylase route): step 2/3. Involved in both the arginine and lysine biosynthetic pathways. The protein is Acetylornithine/succinyldiaminopimelate aminotransferase of Buchnera aphidicola subsp. Acyrthosiphon pisum (strain APS) (Acyrthosiphon pisum symbiotic bacterium).